Consider the following 689-residue polypeptide: Glycine--tRNA ligase beta subunit (689 aa).

The protein belongs to the class-II aminoacyl-tRNA synthetase family. Tetramer of two alpha and two beta subunits.

It localises to the cytoplasm. It catalyses the reaction tRNA(Gly) + glycine + ATP = glycyl-tRNA(Gly) + AMP + diphosphate. The protein is Glycine--tRNA ligase beta subunit of Glaesserella parasuis serovar 5 (strain SH0165) (Haemophilus parasuis).